Here is a 97-residue protein sequence, read N- to C-terminus: Large ribosomal subunit protein eL21 (97 aa).

This sequence belongs to the eukaryotic ribosomal protein eL21 family.

This chain is Large ribosomal subunit protein eL21, found in Methanococcoides burtonii (strain DSM 6242 / NBRC 107633 / OCM 468 / ACE-M).